We begin with the raw amino-acid sequence, 116 residues long: Large ribosomal subunit protein uL18 (116 aa).

The protein belongs to the universal ribosomal protein uL18 family. As to quaternary structure, part of the 50S ribosomal subunit; part of the 5S rRNA/L5/L18/L25 subcomplex. Contacts the 5S and 23S rRNAs.

This is one of the proteins that bind and probably mediate the attachment of the 5S RNA into the large ribosomal subunit, where it forms part of the central protuberance. The polypeptide is Large ribosomal subunit protein uL18 (Shewanella woodyi (strain ATCC 51908 / MS32)).